The chain runs to 195 residues: Putative 3-methyladenine DNA glycosylase (195 aa).

The protein belongs to the DNA glycosylase MPG family.

This Synechococcus sp. (strain JA-3-3Ab) (Cyanobacteria bacterium Yellowstone A-Prime) protein is Putative 3-methyladenine DNA glycosylase.